Reading from the N-terminus, the 230-residue chain is Octanoyltransferase (230 aa).

The BPL/LPL catalytic domain maps to 38-215; sequence AGGADTLLLL…AVCAALDGVL (178 aa). Substrate is bound by residues 76 to 83, 145 to 147, and 158 to 160; these read RGGKITWH, AIG, and GFA. Cys-176 acts as the Acyl-thioester intermediate in catalysis.

This sequence belongs to the LipB family.

The protein localises to the cytoplasm. The catalysed reaction is octanoyl-[ACP] + L-lysyl-[protein] = N(6)-octanoyl-L-lysyl-[protein] + holo-[ACP] + H(+). The protein operates within protein modification; protein lipoylation via endogenous pathway; protein N(6)-(lipoyl)lysine from octanoyl-[acyl-carrier-protein]: step 1/2. Catalyzes the transfer of endogenously produced octanoic acid from octanoyl-acyl-carrier-protein onto the lipoyl domains of lipoate-dependent enzymes. Lipoyl-ACP can also act as a substrate although octanoyl-ACP is likely to be the physiological substrate. This is Octanoyltransferase from Mycobacterium tuberculosis (strain ATCC 25177 / H37Ra).